Reading from the N-terminus, the 649-residue chain is tRNA-guanine(15) transglycosylase (649 aa).

Asp-88 functions as the Nucleophile in the catalytic mechanism. Residues Asp-123 and Ala-194 each contribute to the substrate site. Zn(2+)-binding residues include Cys-280, Cys-282, and Cys-285. One can recognise a PUA domain in the interval Asn-573–Lys-648.

The protein belongs to the archaeosine tRNA-ribosyltransferase family. Zn(2+) serves as cofactor.

It carries out the reaction guanosine(15) in tRNA + 7-cyano-7-deazaguanine = 7-cyano-7-carbaguanosine(15) in tRNA + guanine. The protein operates within tRNA modification; archaeosine-tRNA biosynthesis. Exchanges the guanine residue with 7-cyano-7-deazaguanine (preQ0) at position 15 in the dihydrouridine loop (D-loop) of archaeal tRNAs. This Methanococcus maripaludis (strain C5 / ATCC BAA-1333) protein is tRNA-guanine(15) transglycosylase.